Consider the following 318-residue polypeptide: Pyrimidine-specific ribonucleoside hydrolase RihA (318 aa).

H240 is an active-site residue.

Belongs to the IUNH family. RihA subfamily.

In terms of biological role, hydrolyzes cytidine or uridine to ribose and cytosine or uracil, respectively. The sequence is that of Pyrimidine-specific ribonucleoside hydrolase RihA from Shewanella oneidensis (strain ATCC 700550 / JCM 31522 / CIP 106686 / LMG 19005 / NCIMB 14063 / MR-1).